A 98-amino-acid polypeptide reads, in one-letter code: Aspartyl/glutamyl-tRNA(Asn/Gln) amidotransferase subunit C (98 aa).

It belongs to the GatC family. Heterotrimer of A, B and C subunits.

It catalyses the reaction L-glutamyl-tRNA(Gln) + L-glutamine + ATP + H2O = L-glutaminyl-tRNA(Gln) + L-glutamate + ADP + phosphate + H(+). It carries out the reaction L-aspartyl-tRNA(Asn) + L-glutamine + ATP + H2O = L-asparaginyl-tRNA(Asn) + L-glutamate + ADP + phosphate + 2 H(+). Its function is as follows. Allows the formation of correctly charged Asn-tRNA(Asn) or Gln-tRNA(Gln) through the transamidation of misacylated Asp-tRNA(Asn) or Glu-tRNA(Gln) in organisms which lack either or both of asparaginyl-tRNA or glutaminyl-tRNA synthetases. The reaction takes place in the presence of glutamine and ATP through an activated phospho-Asp-tRNA(Asn) or phospho-Glu-tRNA(Gln). In Acidothermus cellulolyticus (strain ATCC 43068 / DSM 8971 / 11B), this protein is Aspartyl/glutamyl-tRNA(Asn/Gln) amidotransferase subunit C.